We begin with the raw amino-acid sequence, 529 residues long: AAA ATPase forming ring-shaped complexes (529 aa).

The stretch at M15–G62 forms a coiled coil. Residue G253 to L258 coordinates ATP.

It belongs to the AAA ATPase family. In terms of assembly, homohexamer. Assembles into a hexameric ring structure.

The protein is AAA ATPase forming ring-shaped complexes of Bifidobacterium dentium (strain ATCC 27534 / DSM 20436 / JCM 1195 / Bd1).